The chain runs to 76 residues: uncharacterized protein (76 aa).

This is an uncharacterized protein from African swine fever virus (isolate Tick/Malawi/Lil 20-1/1983) (ASFV).